A 243-amino-acid polypeptide reads, in one-letter code: Sec-independent protein translocase protein TATB, chloroplastic (243 aa).

The N-terminal 67 residues, 1–67 (MTPTANLLLP…SRTRRRNVIC (67 aa)), are a transit peptide targeting the chloroplast. Topologically, residues 68–69 (AS) are lumenal. A helical transmembrane segment spans residues 70–90 (LFGVGAPEALVIGVVALLVFG). Topologically, residues 91–243 (PKGLAEVARN…NKSQKAEGER (153 aa)) are stromal. 2 disordered regions span residues 129–165 (EIGIDEVSQSTNYRPTTMNNNQQPAADPNVKPEPAPY) and 178–243 (IAAS…EGER). 2 stretches are compositionally biased toward polar residues: residues 135-152 (VSQSTNYRPTTMNNNQQP) and 187-204 (NPQQPATSQQQEEAPTTP).

This sequence belongs to the TatB family. As to quaternary structure, in thylakoid membranes, TATC and TATB form a large receptor complex, containing about eight TATC-TATB pairs, which binds the precursor protein. Twin arginine signal peptide promotes pH-triggered docking of TATA oligomers to TATC-TATB receptor complex, inducing a conformational switch of TATA that results in activation of the translocase. TATA dissociates from TATC-TATB upon completion of translocation.

The protein localises to the plastid. The protein resides in the chloroplast thylakoid membrane. Its function is as follows. Part of the twin-arginine translocation (Tat) system that transports large folded proteins containing a characteristic twin-arginine motif in their signal peptide across the thylakoid membrane. Involved in delta pH-dependent protein transport required for chloroplast development, especially thylakoid membrane formation. TATC and TATB mediate precursor recognition, whereas TATA facilitates translocation. The protein is Sec-independent protein translocase protein TATB, chloroplastic of Zea mays (Maize).